Consider the following 179-residue polypeptide: Riboflavin kinase (179 aa).

Gly-61–Arg-66 lines the CDP pocket. 2 residues coordinate Mg(2+): Thr-90 and Asn-92. FMN contacts are provided by Thr-147 and Glu-155. Val-160–Arg-163 is a binding site for CDP.

It belongs to the archaeal riboflavin kinase family. Mg(2+) is required as a cofactor.

It catalyses the reaction riboflavin + CTP = CDP + FMN + H(+). It functions in the pathway cofactor biosynthesis; FMN biosynthesis; FMN from riboflavin (CTP route): step 1/1. Catalyzes the CTP-dependent phosphorylation of riboflavin (vitamin B2) to form flavin mononucleotide (FMN). The chain is Riboflavin kinase from Ignicoccus hospitalis (strain KIN4/I / DSM 18386 / JCM 14125).